Here is a 103-residue protein sequence, read N- to C-terminus: DNA-directed RNA polymerase subunit omega (103 aa).

Belongs to the RNA polymerase subunit omega family. The RNAP catalytic core consists of 2 alpha, 1 beta, 1 beta' and 1 omega subunit. When a sigma factor is associated with the core the holoenzyme is formed, which can initiate transcription.

The enzyme catalyses RNA(n) + a ribonucleoside 5'-triphosphate = RNA(n+1) + diphosphate. In terms of biological role, promotes RNA polymerase assembly. Latches the N- and C-terminal regions of the beta' subunit thereby facilitating its interaction with the beta and alpha subunits. This chain is DNA-directed RNA polymerase subunit omega, found in Streptococcus agalactiae serotype III (strain NEM316).